A 154-amino-acid polypeptide reads, in one-letter code: Ribonuclease 8 (154 aa).

The first 27 residues, 1 to 27, serve as a signal peptide directing secretion; it reads MAPARAGCCPLLLLLLGLWVAQIPVSA. The Proton acceptor role is filled by histidine 42. 2 disulfides stabilise this stretch: cysteine 64-cysteine 118 and cysteine 89-cysteine 96. Residues 65 to 69 and lysine 90 each bind substrate; that span reads KDLNT. Histidine 149 acts as the Proton donor in catalysis.

This sequence belongs to the pancreatic ribonuclease family.

It localises to the secreted. Has a low ribonuclease activity. This Chlorocebus aethiops (Green monkey) protein is Ribonuclease 8 (RNASE8).